The following is a 377-amino-acid chain: MSRGIIIIGSGFAARQLVKNIRKQDAHVPLTLIAADSMDEYNKPDLSHVISQSQRADDLTRQLAGEFAEQFNLRLFPHTWVADIDADAHVVKSQDKQWQYDKLVLATGAAALVPPIAGRELMLTLNSQQEYRACEIPLRDAQRVLIVGGGLIGSELAMDFCRAGKTVTLMDNAASLLASLMPPEVSSRLQHHLTDMGVHLLLKSQLQKLEKTEAGIRATLVSQHSIEVDAVIAATGLRPETALARRAGVVVNRGVCVDSYLQTSHPDIYAIGDCAEINGQVLPFLQPIQLSAMYLAKNLLGGNAPLKLPAMLVKVKTPELPLHLAGETQRRDLSWQITAESDGMIAKGMSGEGQLRAFVVSEDRMKEAFALLKTLSV.

Belongs to the FAD-dependent oxidoreductase family. FAD is required as a cofactor.

The protein localises to the cytoplasm. The catalysed reaction is 2 reduced [nitric oxide reductase rubredoxin domain] + NAD(+) + H(+) = 2 oxidized [nitric oxide reductase rubredoxin domain] + NADH. Its pathway is nitrogen metabolism; nitric oxide reduction. Its function is as follows. One of at least two accessory proteins for anaerobic nitric oxide (NO) reductase. Reduces the rubredoxin moiety of NO reductase. In Salmonella paratyphi C (strain RKS4594), this protein is Nitric oxide reductase FlRd-NAD(+) reductase.